The primary structure comprises 420 residues: Proteasome-activating nucleotidase (420 aa).

Residues 1 to 25 (MRSHLVKPGSVYDGIEPGELGETTE) form a disordered region. Residues 22-79 (ETTESVQDRVRQLESRNSFLEEQCSQIESEKRYLENQKIKYEREIRKLQSELDRMKTS) are a coiled coil. Residues 203 to 208 (GTGKTL) and His-342 contribute to the ATP site. The segment at 418-420 (MFV) is docks into pockets in the proteasome alpha-ring to cause gate opening.

It belongs to the AAA ATPase family. Homohexamer. The hexameric complex has a two-ring architecture resembling a top hat that caps the 20S proteasome core at one or both ends. Upon ATP-binding, the C-terminus of PAN interacts with the alpha-rings of the proteasome core by binding to the intersubunit pockets.

It is found in the cytoplasm. Functionally, ATPase which is responsible for recognizing, binding, unfolding and translocation of substrate proteins into the archaeal 20S proteasome core particle. Is essential for opening the gate of the 20S proteasome via an interaction with its C-terminus, thereby allowing substrate entry and access to the site of proteolysis. Thus, the C-termini of the proteasomal ATPase function like a 'key in a lock' to induce gate opening and therefore regulate proteolysis. Unfolding activity requires energy from ATP hydrolysis, whereas ATP binding alone promotes ATPase-20S proteasome association which triggers gate opening, and supports translocation of unfolded substrates. The sequence is that of Proteasome-activating nucleotidase from Methanosarcina mazei (strain ATCC BAA-159 / DSM 3647 / Goe1 / Go1 / JCM 11833 / OCM 88) (Methanosarcina frisia).